The chain runs to 89 residues: Large ribosomal subunit protein bL27 (89 aa).

Positions 1 to 20 are disordered; the sequence is MAHKKAGGSSRNGRDSAGRR.

Belongs to the bacterial ribosomal protein bL27 family.

This is Large ribosomal subunit protein bL27 from Rhizorhabdus wittichii (strain DSM 6014 / CCUG 31198 / JCM 15750 / NBRC 105917 / EY 4224 / RW1) (Sphingomonas wittichii).